The sequence spans 322 residues: Ras association domain-containing protein 4 (322 aa).

The interval 96-161 is disordered; that stretch reads EASPQDSKVP…SKSRAPSEAQ (66 aa). A Phosphoserine modification is found at S142. One can recognise a Ras-associating domain in the interval 175 to 264; it reads YNHKTSVFTP…KIFLMEADLS (90 aa). An SARAH domain is found at 271-318; it reads VAQYIKFEMPVLDSFVEKLKEEEEREIIKLTMKFQALRLTMLQRLEQL.

Interacts directly with activated KRAS in a GTP-dependent manner.

In terms of biological role, potential tumor suppressor. May act as a KRAS effector protein. May promote apoptosis and cell cycle arrest. The chain is Ras association domain-containing protein 4 (Rassf4) from Mus musculus (Mouse).